We begin with the raw amino-acid sequence, 366 residues long: CRS2-associated factor 2, mitochondrial (366 aa).

The transit peptide at 1–14 directs the protein to the mitochondrion; it reads MLLPRDLLLLPWRR. The disordered stretch occupies residues 24-82; it reads RRLNHHRAPPFSDPDDDPPFTRLAERPPRAPSKKKKKEEEDQGGRIRPPEPASSDLPFD. The span at 60-71 shows a compositional bias: basic and acidic residues; it reads KEEEDQGGRIRP. 2 CRM domains span residues 143–241 and 263–359; these read EPLA…QRPQ and DGLT…SVSL.

In terms of assembly, part of large ribonucleo-protein complexes that include group IIB introns.

It is found in the mitochondrion. Its function is as follows. May be involved in the splicing of group IIB introns in mitochondria. In Oryza sativa subsp. japonica (Rice), this protein is CRS2-associated factor 2, mitochondrial.